We begin with the raw amino-acid sequence, 416 residues long: Glutamyl-tRNA reductase (416 aa).

Residues threonine 49–arginine 52, serine 105, glutamate 110–glutamine 112, and glutamine 116 contribute to the substrate site. The active-site Nucleophile is cysteine 50. NADP(+) is bound at residue glycine 185 to isoleucine 190.

The protein belongs to the glutamyl-tRNA reductase family. In terms of assembly, homodimer.

It carries out the reaction (S)-4-amino-5-oxopentanoate + tRNA(Glu) + NADP(+) = L-glutamyl-tRNA(Glu) + NADPH + H(+). It participates in porphyrin-containing compound metabolism; protoporphyrin-IX biosynthesis; 5-aminolevulinate from L-glutamyl-tRNA(Glu): step 1/2. Functionally, catalyzes the NADPH-dependent reduction of glutamyl-tRNA(Glu) to glutamate 1-semialdehyde (GSA). This Shewanella amazonensis (strain ATCC BAA-1098 / SB2B) protein is Glutamyl-tRNA reductase.